Reading from the N-terminus, the 202-residue chain is Probable chemoreceptor glutamine deamidase CheD 2 (202 aa).

This sequence belongs to the CheD family.

It catalyses the reaction L-glutaminyl-[protein] + H2O = L-glutamyl-[protein] + NH4(+). In terms of biological role, probably deamidates glutamine residues to glutamate on methyl-accepting chemotaxis receptors (MCPs), playing an important role in chemotaxis. The polypeptide is Probable chemoreceptor glutamine deamidase CheD 2 (Shewanella oneidensis (strain ATCC 700550 / JCM 31522 / CIP 106686 / LMG 19005 / NCIMB 14063 / MR-1)).